Here is a 912-residue protein sequence, read N- to C-terminus: Brevican core protein (912 aa).

An N-terminal signal peptide occupies residues 1–22; it reads MAPLFLPLLATLVLAWIPVALA. The Ig-like V-type domain maps to 36-155; it reads RVRIAGDAPL…SSDAVEVKVK (120 aa). Intrachain disulfides connect C57–C137, C179–C250, C203–C224, C277–C352, and C301–C322. A glycan (N-linked (GlcNAc...) asparagine) is linked at N130. 2 consecutive Link domains span residues 157 to 252 and 257 to 354; these read VVFL…YCYA and GELF…YCFR. A glycan (N-linked (GlcNAc...) asparagine) is linked at N337. Disordered regions lie at residues 408-427 and 438-651; these read IPIIEDGGGGSSTPEDPAEA and SIVP…SGDC. S418 carries the phosphoserine modification. S418 carries an O-linked (Xyl...) (chondroitin sulfate) serine glycan. Positions 448–463 are enriched in basic and acidic residues; sequence EEGKVLEQEEKYRGEE. Over residues 464–478 the composition is skewed to acidic residues; it reads EKEEEEEEEEVEDEA. A compositionally biased stretch (pro residues) spans 520–537; the sequence is VSPPPYDEPEAPRPPRVL. Basic and acidic residues predominate over residues 603 to 617; it reads GDTRDLETPSEENSR. An EGF-like domain is found at 647-683; the sequence is SSGDCVPSPCHNGGTCLEEEEGVRCLCLPGYGGDLCD. Disulfide bonds link C651–C662, C656–C671, C673–C682, C689–C700, C717–C809, C785–C801, C816–C859, and C845–C872. One can recognise a C-type lectin domain in the interval 683–811; that stretch reads DVGLHFCSPG…NYHLSYTCKM (129 aa). Residues 814–874 form the Sushi domain; it reads VSCGPPPELP…WGLPQISCVP (61 aa).

Belongs to the aggrecan/versican proteoglycan family. In terms of assembly, interacts with TNR. In terms of processing, O-glycosylated; contains chondroitin sulfate. As to expression, brain; expressed in cerebellar astrocytes but not in neurons.

The protein resides in the secreted. Its subcellular location is the extracellular space. The protein localises to the extracellular matrix. Functionally, may play a role in the terminally differentiating and the adult nervous system during postnatal development. Could stabilize interactions between hyaluronan (HA) and brain proteoglycans. This is Brevican core protein (BCAN) from Bos taurus (Bovine).